We begin with the raw amino-acid sequence, 418 residues long: Thyroid hormone receptor alpha-A (418 aa).

The tract at residues 1 to 38 is disordered; it reads MDQNLSGLDCLSEPDEKRWPDGKRKRKNSQCMGKSGMS. A modulating region spans residues 1–60; it reads MDQNLSGLDCLSEPDEKRWPDGKRKRKNSQCMGKSGMSGDSLVSLPSAGYIPSYLDKDEP. NR C4-type zinc fingers lie at residues 61–81 and 99–123; these read CVVC…CEGC and CKYD…FKKC. The segment at residues 61–135 is a DNA-binding region (nuclear receptor); it reads CVVCSDKATG…VGMAMDLVLD (75 aa). One can recognise an NR LBD domain in the interval 171-415; the sequence is EEWELIRIVT…PPLFLEVFED (245 aa).

It belongs to the nuclear hormone receptor family. NR1 subfamily. Binds to thyroid hormone receptor element (TRE) weakly as homodimers and monomers, but binds TRE with much higher affinity as heterodimers with retinoid X receptors. Can bind DNA as a heterodimer with either rxra or rxrg.

It is found in the nucleus. In terms of biological role, high affinity receptor for triiodothyronine (T3). This chain is Thyroid hormone receptor alpha-A (thra-a), found in Xenopus laevis (African clawed frog).